We begin with the raw amino-acid sequence, 584 residues long: Transcriptional regulator STP2 (584 aa).

Polar residues-rich tracts occupy residues 1–11 and 180–202; these read MSVAITSNNNK and AESN…SISD. Disordered regions lie at residues 1–22 and 161–214; these read MSVA…PHLK and KMHP…STVS. Over residues 203 to 214 the composition is skewed to low complexity; sequence SPSHSETESTVS. The C2H2-type zinc finger occupies 225–247; sequence FKCPSCDAEFRVRGYLTRHMKKH. 2 disordered regions span residues 381–496 and 553–584; these read RQKK…PQQP and QYQP…SMYF. The segment covering 394–407 has biased composition (low complexity); sequence SESSIQSQESESSI. Positions 431–441 are enriched in basic residues; sequence QHQHQHHHHVQ. Residues 442–480 show a composition bias toward low complexity; that stretch reads NQHQQHVNQQQSIATPASIYSSSASSTSSYESTHSPYTP. Positions 481 to 496 are enriched in polar residues; the sequence is QSSRSPLSHMYNPQQP.

In terms of processing, proteolytically cleaved: activated by the amino acid-induced proteolytic removal of an N-terminal inhibitory domain.

It localises to the cell membrane. It is found in the nucleus. Transcription factor involved in the regulation of gene expression in response to extracellular amino acid levels. Synthesized as latent cytoplasmic precursor, which, upon a signal initiated by the plasma membrane SPS amino acid sensor system (including CSY1 and CSH3), becomes proteolytically activated and relocates to the nucleus, where it induces the expression of SPS-sensor-regulated genes. Required for efficient alkalinization through the release of ammonia from the cells produced during the breakdown of amino acids, and subsequent switch to the hyphal form. This is Transcriptional regulator STP2 (STP2) from Candida albicans (strain SC5314 / ATCC MYA-2876) (Yeast).